A 318-amino-acid chain; its full sequence is Bis(5'-nucleosyl)-tetraphosphatase, symmetrical (318 aa).

The interval 269 to 318 is disordered; sequence PGREVTGPAPVARAPRRPRERLGRQRSRGNRGNAGNTAVPAKPPVDTPQD. Positions 282–297 are enriched in basic residues; it reads APRRPRERLGRQRSRG. Pro residues predominate over residues 309 to 318; sequence AKPPVDTPQD.

It belongs to the Ap4A hydrolase family.

It catalyses the reaction P(1),P(4)-bis(5'-adenosyl) tetraphosphate + H2O = 2 ADP + 2 H(+). Its function is as follows. Hydrolyzes diadenosine 5',5'''-P1,P4-tetraphosphate to yield ADP. This is Bis(5'-nucleosyl)-tetraphosphatase, symmetrical from Xanthomonas oryzae pv. oryzae (strain PXO99A).